The sequence spans 545 residues: Glucose-6-phosphate isomerase (545 aa).

Catalysis depends on E351, which acts as the Proton donor. Active-site residues include H382 and K510.

It belongs to the GPI family.

The protein resides in the cytoplasm. It carries out the reaction alpha-D-glucose 6-phosphate = beta-D-fructose 6-phosphate. Its pathway is carbohydrate biosynthesis; gluconeogenesis. The protein operates within carbohydrate degradation; glycolysis; D-glyceraldehyde 3-phosphate and glycerone phosphate from D-glucose: step 2/4. Catalyzes the reversible isomerization of glucose-6-phosphate to fructose-6-phosphate. The polypeptide is Glucose-6-phosphate isomerase (Shewanella baltica (strain OS155 / ATCC BAA-1091)).